Consider the following 329-residue polypeptide: Biotin synthase (329 aa).

Residues 38–262 (NTIQVSTLLS…IMPHSYIRLS (225 aa)) enclose the Radical SAM core domain. [4Fe-4S] cluster-binding residues include C53, C57, and C60. Residues C97, C128, C188, and R260 each coordinate [2Fe-2S] cluster.

The protein belongs to the radical SAM superfamily. Biotin synthase family. Homodimer. The cofactor is [4Fe-4S] cluster. [2Fe-2S] cluster serves as cofactor.

The enzyme catalyses (4R,5S)-dethiobiotin + (sulfur carrier)-SH + 2 reduced [2Fe-2S]-[ferredoxin] + 2 S-adenosyl-L-methionine = (sulfur carrier)-H + biotin + 2 5'-deoxyadenosine + 2 L-methionine + 2 oxidized [2Fe-2S]-[ferredoxin]. Its pathway is cofactor biosynthesis; biotin biosynthesis; biotin from 7,8-diaminononanoate: step 2/2. Functionally, catalyzes the conversion of dethiobiotin (DTB) to biotin by the insertion of a sulfur atom into dethiobiotin via a radical-based mechanism. This is Biotin synthase from Acinetobacter baumannii (strain ACICU).